The sequence spans 291 residues: MSSIYKALAGKSKDNKSEKKQGNVKQFMNKQRTLLISSRGVNYRHRHLIQDLSGLLPHSRKEPKLDTKKDLQQLNEIAELYNCNNVLFFEARKHQDLYLWLSKPPNGPTIKFYIQNLHTMDELNFTGNCLKGSRPVLSFDQRFESSPHYQLIKELLVHNFGVPPNARKSKPFIDHVMSFSIVDDKIWVRTYEISHSTKNKEEYEDGEEDISLVEIGPRFVMTVILILEGSFGGPKIYENKQYVSPNVVRAQIKQQAAEEAKSRAEAAVERKIKRRENVLAADPLSNDALFK.

Residues 31 to 232 (QRTLLISSRG…VILILEGSFG (202 aa)) enclose the Brix domain. Phosphoserine is present on S285.

Belongs to the BRX1 family. Part of a complex that includes BRX1, RPF1, RPF2 and SSF1 or SSF2.

The protein localises to the nucleus. The protein resides in the nucleolus. Functionally, required for biogenesis of the 60S ribosomal subunit. This chain is Ribosome biogenesis protein BRX1 (BRX1), found in Saccharomyces cerevisiae (strain ATCC 204508 / S288c) (Baker's yeast).